The sequence spans 322 residues: ATP-dependent 6-phosphofructokinase (322 aa).

An ATP-binding site is contributed by G11. 21–25 (RAVTR) serves as a coordination point for ADP. ATP contacts are provided by residues 72 to 73 (RC) and 102 to 105 (GDGS). D103 is a binding site for Mg(2+). Position 127-129 (127-129 (TID)) interacts with substrate. D129 (proton acceptor) is an active-site residue. An ADP-binding site is contributed by R156. Residues R164 and 171–173 (MGR) contribute to the substrate site. Residues 187 to 189 (GAE), R213, and 215 to 217 (KKH) each bind ADP. Residues E224, R245, and 251–254 (HIQR) contribute to the substrate site.

This sequence belongs to the phosphofructokinase type A (PFKA) family. ATP-dependent PFK group I subfamily. Prokaryotic clade 'B1' sub-subfamily. Homotetramer. It depends on Mg(2+) as a cofactor.

Its subcellular location is the cytoplasm. The catalysed reaction is beta-D-fructose 6-phosphate + ATP = beta-D-fructose 1,6-bisphosphate + ADP + H(+). The protein operates within carbohydrate degradation; glycolysis; D-glyceraldehyde 3-phosphate and glycerone phosphate from D-glucose: step 3/4. Allosterically activated by ADP and other diphosphonucleosides, and allosterically inhibited by phosphoenolpyruvate. Functionally, catalyzes the phosphorylation of D-fructose 6-phosphate to fructose 1,6-bisphosphate by ATP, the first committing step of glycolysis. The polypeptide is ATP-dependent 6-phosphofructokinase (Staphylococcus epidermidis (strain ATCC 12228 / FDA PCI 1200)).